The chain runs to 143 residues: Nucleoside diphosphate kinase (143 aa).

ATP-binding residues include Lys11, Phe59, Arg87, Thr93, Arg104, and Asn114. The active-site Pros-phosphohistidine intermediate is the His117.

The protein belongs to the NDK family. In terms of assembly, homotetramer. Requires Mg(2+) as cofactor.

The protein resides in the cytoplasm. The catalysed reaction is a 2'-deoxyribonucleoside 5'-diphosphate + ATP = a 2'-deoxyribonucleoside 5'-triphosphate + ADP. It carries out the reaction a ribonucleoside 5'-diphosphate + ATP = a ribonucleoside 5'-triphosphate + ADP. Its function is as follows. Major role in the synthesis of nucleoside triphosphates other than ATP. The ATP gamma phosphate is transferred to the NDP beta phosphate via a ping-pong mechanism, using a phosphorylated active-site intermediate. This is Nucleoside diphosphate kinase from Alcanivorax borkumensis (strain ATCC 700651 / DSM 11573 / NCIMB 13689 / SK2).